The following is a 632-amino-acid chain: MSASTSTSTAASQDACYISLLGLAEYFRTSQPPNIKKCIQCLQALFTFMPPSKVEARTHLQMGQILMAYTKNIDLARQHLEKAWSISEPLPNFDVKFDTASLLAQLHLQTDKNSHQAKAMLRRAVELSQNNVYWHCKLLLQLAQIHASDREYSLASELLAVGAESADEASATYLKVLFLLSRAMILMIERKTNDVLALLNSAGQIIDNNIPNPHQKEYLKVFFLVLQVCYYLALGQVKTVKPSLKQLQMSIQTIMAPNWPSDEAIFGANQLEMFVWLPKEQLYVLVYLVTVSHSMMAGYMDKAQKYTEKALTQIEKLKQQEDKPILSVFKVILLEHIVMCRMVMGNRELAIREIAAARDVCMAAPQRTLLRRHSAQLHCLIGLYSMSTNLFEHAERQFVVCVSETSERDLKLFANLNLAIIYLRTKRDTDLKQILDAVSTENTHTYSSQALMGGFYYVQGLHAFHKNSFHEAKRFLRETLKMANAEDLNRLTSCSLVLLSHVFLSIGNSKESMNMVTPAMQLASKIPDIHVQLWGSAILKDLHRMSKDVQHEKDAYANHVKYSENLIADQRKCVQSAHHELVNWFQGDPPVTSGPPATPVLLMPESSVTSSVPVIASTSAAMQPAGQYGQFY.

TPR repeat units lie at residues 453–486 (GGFYYVQGLHAFHKNSFHEAKRFLRETLKMANAE) and 493–526 (SCSLVLLSHVFLSIGNSKESMNMVTPAMQLASKI).

Belongs to the SCC4/mau-2 family. As to quaternary structure, interacts with Nipped-B to form the cohesin loading complex.

Its subcellular location is the nucleus. The protein resides in the nucleoplasm. Functionally, required for association of the cohesin complex with chromatin during interphase. Plays a role in sister chromatid cohesion and normal progression through prometaphase. In Drosophila yakuba (Fruit fly), this protein is MAU2 chromatid cohesion factor homolog.